Reading from the N-terminus, the 249-residue chain is Long form salivary protein D7L (249 aa).

The first 19 residues, 1 to 19 (MNAVITSLVFISLVGVGYS), serve as a signal peptide directing secretion. 2 cysteine pairs are disulfide-bonded: Cys36-Cys66 and Cys62-Cys112. Trp49 contacts thromboxane A2. Leukotriene C4 is bound at residue Trp52. Tyr63 is a binding site for thromboxane A2. Residues Gly136 and Lys154 each contribute to the leukotriene C4 site. Position 154 (Lys154) interacts with thromboxane A2. 3 disulfides stabilise this stretch: Cys162-Cys178, Cys174-Cys221, and Cys211-Cys230.

It belongs to the PBP/GOBP family.

The protein localises to the secreted. Its function is as follows. Modulates blood feeding of female sandflies on vertebrate species by binding and sequestering different mediators involved in the host response. Binds leukotriene C4, leukotriene D4, leukotriene E4 and U-46619, a stable analog of thromboxane A2. Does not bind histamine or serotonin. Inhibits platelet aggregation induced by low concentrations of collagen in thromboxane A2-dependent manner. This Phlebotomus duboscqi (Sandfly) protein is Long form salivary protein D7L.